A 160-amino-acid polypeptide reads, in one-letter code: MSRRHAAGKRVILPDMKYNSILLSRFINNLMKEGKKALAEKIVYSAFNKIEKKHRVDPYQIFNNAMHNVKPHLEVTSVRVGGANYQVPTHVDESRGYALASRWIINAALKRSEKMMIDKLAEELFEASNNRGVAIKKKEDTHKMAEANKAFSHFSPKKMK.

The protein belongs to the universal ribosomal protein uS7 family. In terms of assembly, part of the 30S ribosomal subunit. Contacts proteins S9 and S11.

Functionally, one of the primary rRNA binding proteins, it binds directly to 16S rRNA where it nucleates assembly of the head domain of the 30S subunit. Is located at the subunit interface close to the decoding center, probably blocks exit of the E-site tRNA. The protein is Small ribosomal subunit protein uS7 of Rickettsia canadensis (strain McKiel).